The sequence spans 439 residues: Probable tRNA pseudouridine synthase D (439 aa).

Catalysis depends on Asp87, which acts as the Nucleophile. The TRUD domain maps to Gly166–Leu391.

The protein belongs to the pseudouridine synthase TruD family.

It carries out the reaction uridine(13) in tRNA = pseudouridine(13) in tRNA. Functionally, could be responsible for synthesis of pseudouridine from uracil-13 in transfer RNAs. The chain is Probable tRNA pseudouridine synthase D from Methanococcoides burtonii (strain DSM 6242 / NBRC 107633 / OCM 468 / ACE-M).